The sequence spans 230 residues: uncharacterized protein (230 aa).

The region spanning 2–230 is the ABC transporter domain; the sequence is IQLSNVRKSY…ASSGQRSVGE (229 aa). 38 to 45 provides a ligand contact to ATP; that stretch reads GPSGSGKS.

This sequence belongs to the ABC transporter superfamily. In terms of assembly, part of a complex composed of YknX, YknY and YknZ. The complex interacts with YknW.

The protein resides in the cell membrane. Functionally, part of an unusual four-component transporter, which is required for protection against the killing factor SdpC (sporulation-delaying protein). This is an uncharacterized protein from Bacillus subtilis (strain 168).